The chain runs to 526 residues: Major facilitator superfamily domain-containing protein 4A (526 aa).

The next 12 membrane-spanning stretches (helical) occupy residues 21-41 (LTYWSVFFSFGLCVAFLGPTI), 55-75 (ITLVFFSQQFFLFLGSTIGGF), 84-104 (LSSLAVSTLIISVVFAIIPLC), 107-127 (LLMLAFAMAVSGLAMGTIDTI), 142-162 (VFLQALHFFVGLGALVSPLIA), 215-235 (YAFWIMAIINLPVPIAIFVLV), 297-317 (LSFFGIHVLGGLVLFFSDGIV), 341-361 (GYLTCIFWAAITTGRLSAIPL), 377-397 (GVIVTVLLLLIFSNSSVFLFI), 401-421 (CLGLFISSIFPCMLALTEDIL), 430-450 (VLVTSAGMGEMVLQVLVGSVM), and 458-478 (FLLCGMIFGCLGFTFFTFLYF).

The protein belongs to the major facilitator superfamily.

The protein localises to the membrane. This chain is Major facilitator superfamily domain-containing protein 4A (mfsd4a), found in Danio rerio (Zebrafish).